The chain runs to 308 residues: Ribonuclease H2 subunit B (308 aa).

Ala2 carries the N-acetylalanine modification. Lys292 carries the post-translational modification N6-acetyllysine. Ser293 carries the post-translational modification Phosphoserine.

Belongs to the RNase H2 subunit B family. As to quaternary structure, the RNase H2 complex is a heterotrimer composed of the catalytic subunit RNASEH2A and the non-catalytic subunits RNASEH2B and RNASEH2C.

Its subcellular location is the nucleus. Non catalytic subunit of RNase H2, an endonuclease that specifically degrades the RNA of RNA:DNA hybrids. Participates in DNA replication, possibly by mediating the removal of lagging-strand Okazaki fragment RNA primers during DNA replication. Mediates the excision of single ribonucleotides from DNA:RNA duplexes. The polypeptide is Ribonuclease H2 subunit B (Rnaseh2b) (Mus musculus (Mouse)).